Reading from the N-terminus, the 128-residue chain is MAIWQGASRRLSTGAKVWRAAKKHKREMGRPAAETQVSDRIKRKIVRCRGANLKVKLEKTNYANVFDQANKVCKKVAVTKVLDNKANKHYIRRNVMTKGAIIETEMGKAKVTSRPGQDGVVNAVLLTE.

It belongs to the eukaryotic ribosomal protein eS8 family. In terms of assembly, part of the 30S ribosomal subunit.

The polypeptide is Small ribosomal subunit protein eS8 (Methanococcus maripaludis (strain C6 / ATCC BAA-1332)).